The following is an 88-amino-acid chain: LYR motif-containing protein 2 (88 aa).

The transit peptide at 1 to 19 directs the protein to the mitochondrion; the sequence is MAASRLPPAALTLKQFMRR.

It belongs to the complex I LYR family.

The protein resides in the mitochondrion. In terms of biological role, involved in efficient integration of the N-module into mitochondrial respiratory chain complex I. This Mus musculus (Mouse) protein is LYR motif-containing protein 2 (Lyrm2).